The following is a 134-amino-acid chain: Large ribosomal subunit protein uL16c (134 aa).

This sequence belongs to the universal ribosomal protein uL16 family. In terms of assembly, part of the 50S ribosomal subunit.

It is found in the plastid. Its subcellular location is the chloroplast. The sequence is that of Large ribosomal subunit protein uL16c from Guillardia theta (Cryptophyte).